The following is a 639-amino-acid chain: Coiled-coil domain-containing protein 27 (639 aa).

Positions 154–176 (YPRKRSEPSDPSPTGSPTVVKKS) are disordered. The stretch at 203-242 (QRFSEMESQMQKKDQEILTLQKEKEALKKQLKNLLRGKGT) forms a coiled coil. Positions 291–385 (ESSKELHVEP…EECHPKRSYS (95 aa)) are disordered. A compositionally biased stretch (basic and acidic residues) spans 292 to 309 (SSKELHVEPGSAIEEKSS). The segment covering 310 to 320 (EGPPEEAAAAK) has biased composition (low complexity). Acidic residues-rich tracts occupy residues 336–350 (GPEEEEEEEEEEVEG) and 358–369 (EGEILVNEEEAS). Residues 370–380 (WELREDEECHP) are compositionally biased toward basic and acidic residues.

This is Coiled-coil domain-containing protein 27 (Ccdc27) from Mus musculus (Mouse).